The primary structure comprises 492 residues: Lipopolysaccharide biosynthesis protein WzxC (492 aa).

The Cytoplasmic portion of the chain corresponds to 1-12; the sequence is MSLREKTISGAK. Residues 13 to 33 traverse the membrane as a helical segment; sequence WSAIATVIIIGLGLVQMTVLA. Residues 34-42 lie on the Periplasmic side of the membrane; the sequence is RIIDNHQFG. Residues 43–63 traverse the membrane as a helical segment; it reads LLTVSLVIIALADTLSDFGIA. Over 64 to 81 the chain is Cytoplasmic; the sequence is NSIIQRKEISHLELTTLY. The chain crosses the membrane as a helical span at residues 82 to 102; sequence WLNVGLGIVVCVAVFLLSDLI. The Periplasmic portion of the chain corresponds to 103–104; it reads GD. The helical transmembrane segment at 105–125 threads the bilayer; the sequence is VLNNPDLAPLIKTLSLAFVVI. The Cytoplasmic segment spans residues 126-157; sequence PHGQQFRALMQKELEFNKIGMIETSAVLAGFT. Residues 158-178 traverse the membrane as a helical segment; the sequence is CTVVSAHFWPLAMTAILGYLV. At 179-236 the chain is on the periplasmic side; it reads NSAVRTLLFGYFGRKIYRPGLHFSLASVAPNLRFGAWLTADSIINYLNTNLSTLVLAR. The helical transmembrane segment at 237–257 threads the bilayer; that stretch reads ILGAGVAGGYNLAYNVAVVPP. Over 258–288 the chain is Cytoplasmic; sequence MKLNPIITRVLFPAFAKIQDDTEKLRVNFYK. A helical membrane pass occupies residues 289–309; that stretch reads LLSVVGIINFPALLGLMVVSN. The Periplasmic portion of the chain corresponds to 310–322; the sequence is NFVPLVFGEKWNS. The helical transmembrane segment at 323–343 threads the bilayer; the sequence is IIPVLQLLCVVGLLRSVGNPI. Residues 344-364 lie on the Cytoplasmic side of the membrane; the sequence is GSLLMAKARVDISFKFNVFKT. A helical membrane pass occupies residues 365 to 385; it reads FLFIPAIVIGGQMAGAIGVTL. A topological domain (periplasmic) is located at residue Gly-386. Residues 387 to 407 form a helical membrane-spanning segment; that stretch reads FLLVQIINTILSYFVMIKPVL. Residues 408–417 lie on the Cytoplasmic side of the membrane; sequence GSSYRQYILS. The helical transmembrane segment at 418-438 threads the bilayer; that stretch reads LWLPFYLSLPTLVVSYALGIV. The Periplasmic portion of the chain corresponds to 439 to 445; sequence LKGQLAL. The chain crosses the membrane as a helical span at residues 446–466; the sequence is GMLLAVQIATGVLAFVVMIVL. Over 467–492 the chain is Cytoplasmic; it reads SRHPLVVEVKRQFCRSEKMKMLLRAG.

Belongs to the polysaccharide synthase family.

Its subcellular location is the cell inner membrane. The protein operates within bacterial outer membrane biogenesis; lipopolysaccharide biosynthesis. In Escherichia coli (strain K12), this protein is Lipopolysaccharide biosynthesis protein WzxC (wzxC).